Reading from the N-terminus, the 131-residue chain is Large ribosomal subunit protein bL17 (131 aa).

It belongs to the bacterial ribosomal protein bL17 family. Part of the 50S ribosomal subunit. Contacts protein L32.

This is Large ribosomal subunit protein bL17 from Bordetella parapertussis (strain 12822 / ATCC BAA-587 / NCTC 13253).